Here is a 295-residue protein sequence, read N- to C-terminus: Tetrahydromethanopterin S-methyltransferase subunit E (295 aa).

Transmembrane regions (helical) follow at residues 4 to 24 (MITGLGVVALMGAAATIAGAA), 60 to 80 (GEPVAYGTWCGIAGSVAFVLM), 87 to 107 (VIMAIAIGAVIAAMVHTTYAV), 140 to 160 (GFIVTFCTVGLSYLMTLPIPG), 161 to 181 (FAHPFPLPLLAVLWGITIGAI), 234 to 254 (YGGPLTGFAFGAIVFLSFWNT), and 255 to 275 (IVFGITGGIISGLIIVLLLII).

The protein belongs to the MtrE family. The complex is composed of 8 subunits; MtrA, MtrB, MtrC, MtrD, MtrE, MtrF, MtrG and MtrH.

The protein resides in the cell membrane. It carries out the reaction 5-methyl-5,6,7,8-tetrahydromethanopterin + coenzyme M + 2 Na(+)(in) = 5,6,7,8-tetrahydromethanopterin + methyl-coenzyme M + 2 Na(+)(out). The protein operates within one-carbon metabolism; methanogenesis from CO(2); methyl-coenzyme M from 5,10-methylene-5,6,7,8-tetrahydromethanopterin: step 2/2. In terms of biological role, part of a complex that catalyzes the formation of methyl-coenzyme M and tetrahydromethanopterin from coenzyme M and methyl-tetrahydromethanopterin. This is an energy-conserving, sodium-ion translocating step. The chain is Tetrahydromethanopterin S-methyltransferase subunit E from Methanothermobacter marburgensis (strain ATCC BAA-927 / DSM 2133 / JCM 14651 / NBRC 100331 / OCM 82 / Marburg) (Methanobacterium thermoautotrophicum).